A 141-amino-acid polypeptide reads, in one-letter code: UPF0225 protein Rmet_0111 (141 aa).

This sequence belongs to the UPF0225 family.

The polypeptide is UPF0225 protein Rmet_0111 (Cupriavidus metallidurans (strain ATCC 43123 / DSM 2839 / NBRC 102507 / CH34) (Ralstonia metallidurans)).